Consider the following 587-residue polypeptide: L-ornithine N(5)-monooxygenase (587 aa).

FAD-binding positions include 53-61 (EKHTSFQWH) and Gln-72. Position 77 (Lys-77) interacts with substrate. Residue 235 to 238 (GGQS) participates in NADP(+) binding. Substrate contacts are provided by residues 282-285 (NEVF) and Asn-312. 312 to 314 (NYS) lines the NADP(+) pocket. The interval 488-511 (DNSAASGVSGASTPLTSPSEEEGK) is disordered. Positions 491–505 (AASGVSGASTPLTSP) are enriched in polar residues. 567-569 (TLL) contacts FAD. Ser-570 contributes to the substrate binding site.

Belongs to the lysine N(6)-hydroxylase/L-ornithine N(5)-oxygenase family. As to quaternary structure, homotetramer. FAD serves as cofactor.

It carries out the reaction L-ornithine + NADPH + O2 = N(5)-hydroxy-L-ornithine + NADP(+) + H2O. The enzyme catalyses L-ornithine + NADH + O2 = N(5)-hydroxy-L-ornithine + NAD(+) + H2O. It functions in the pathway siderophore biosynthesis; ferrichrome biosynthesis. Functionally, L-ornithine N(5)-monooxygenase; part of the siderophore biosynthetic pathway. Omphalotus olearius produces ferrichrome A, but no other siderophore has been detected. Ferrichrome A consists of a hexapeptide ring made up of one glycine, two serine, and three N(5)-hydroxyornithine amino acid residues, the latter acylated by trans-(alpha-methyl)-glutaconic acid residues. The biosynthesis of ferrichrome A depends on the hydroxylation of ornithine to N(5)-hydroxyornithine, catalyzed by the monooxygenase omo1. The second step, the acylation of N(5)-hydroxy-L-ornithine is probably catalyzed by the N-acyltransferase ato1. Finally, assembly of ferrichrome A is catalyzed by the nonribosomal peptide synthase (NRPS) fso1. The protein is L-ornithine N(5)-monooxygenase of Omphalotus olearius (Jack o'lantern).